The chain runs to 513 residues: ATP synthase subunit alpha (513 aa).

169–176 provides a ligand contact to ATP; it reads GDRQTGKT.

Belongs to the ATPase alpha/beta chains family. As to quaternary structure, F-type ATPases have 2 components, CF(1) - the catalytic core - and CF(0) - the membrane proton channel. CF(1) has five subunits: alpha(3), beta(3), gamma(1), delta(1), epsilon(1). CF(0) has three main subunits: a(1), b(2) and c(9-12). The alpha and beta chains form an alternating ring which encloses part of the gamma chain. CF(1) is attached to CF(0) by a central stalk formed by the gamma and epsilon chains, while a peripheral stalk is formed by the delta and b chains.

The protein localises to the cell inner membrane. It catalyses the reaction ATP + H2O + 4 H(+)(in) = ADP + phosphate + 5 H(+)(out). Its function is as follows. Produces ATP from ADP in the presence of a proton gradient across the membrane. The alpha chain is a regulatory subunit. This Cupriavidus necator (strain ATCC 17699 / DSM 428 / KCTC 22496 / NCIMB 10442 / H16 / Stanier 337) (Ralstonia eutropha) protein is ATP synthase subunit alpha.